Consider the following 330-residue polypeptide: Putative glycosyltransferase HI_0258 (330 aa).

The span at 1-31 (MTDRQTDRQTDRQTDRQTDRQTDRQTDRQTD) shows a compositional bias: basic and acidic residues. Positions 1 to 32 (MTDRQTDRQTDRQTDRQTDRQTDRQTDRQTDG) are disordered. UDP-binding positions include 44–49 (SSDHYY) and 140–141 (DV). The Mn(2+) site is built by Asp-140, Asp-142, and His-270. 270-276 (HYCGPNK) contacts UDP.

This sequence belongs to the glycosyltransferase 8 family.

The polypeptide is Putative glycosyltransferase HI_0258 (Haemophilus influenzae (strain ATCC 51907 / DSM 11121 / KW20 / Rd)).